The primary structure comprises 164 residues: FMN reductase (NADH) RutF (164 aa).

Belongs to the non-flavoprotein flavin reductase family. RutF subfamily.

The catalysed reaction is FMNH2 + NAD(+) = FMN + NADH + 2 H(+). Catalyzes the reduction of FMN to FMNH2 which is used to reduce pyrimidine by RutA via the Rut pathway. The sequence is that of FMN reductase (NADH) RutF from Escherichia coli O6:K15:H31 (strain 536 / UPEC).